The primary structure comprises 711 residues: Probable cadmium-transporting ATPase (711 aa).

Residues 3-66 form the HMA domain; sequence EKTVYRVDGL…AGAFEHLKII (64 aa). Cd(2+) is bound by residues Cys14 and Cys17. A run of 5 helical transmembrane segments spans residues 89-109, 111-131, 151-171, 317-337, and 347-367; these read WRLL…IMNG, DFYL…YSLF, IAII…VVIL, TPAI…LFGG, and LSVL…VAIV. Asp398 serves as the catalytic 4-aspartylphosphate intermediate. The chain crosses the membrane as a helical span at residues 669 to 689; the sequence is VIKLIALLLVIPGWLTLWIAI.

This sequence belongs to the cation transport ATPase (P-type) (TC 3.A.3) family. Type IB subfamily.

Its subcellular location is the cell membrane. It carries out the reaction Cd(2+)(in) + ATP + H2O = Cd(2+)(out) + ADP + phosphate + H(+). Functionally, couples the hydrolysis of ATP with the export of cadmium. This is Probable cadmium-transporting ATPase (cadA) from Listeria monocytogenes.